The following is a 152-amino-acid chain: MSDAQQPVFNIEKLYVKDLSVEVPNAPAVYLEREAPQMEVNMSTESRALNEDMYHSSITVTVTAKLGDKTMFLVECTQAGIFRIQNVPQDQMPMVLGIGCPNIVFPYLRETVSDVVIRAGFPPLLLNPVNFEAIFVQQQQAQQQQAGAAQTH.

The protein belongs to the SecB family. Homotetramer, a dimer of dimers. One homotetramer interacts with 1 SecA dimer.

It localises to the cytoplasm. Functionally, one of the proteins required for the normal export of preproteins out of the cell cytoplasm. It is a molecular chaperone that binds to a subset of precursor proteins, maintaining them in a translocation-competent state. It also specifically binds to its receptor SecA. The chain is Protein-export protein SecB from Thiobacillus denitrificans (strain ATCC 25259 / T1).